The sequence spans 162 residues: Auracyanin-A (162 aa).

An N-terminal signal peptide occupies residues 1-22 (MKITLRMMVLAVLTAMAMVLAA). Residue Cys23 is the site of N-palmitoyl cysteine attachment. A lipid anchor (S-diacylglycerol cysteine) is attached at Cys23. Residues 42–162 (VTIEIGSKGE…PLMQGKLVVN (121 aa)) form the Plastocyanin-like domain. Residues His81, Cys146, His151, and Met155 each contribute to the Cu cation site.

Monomer. Cu cation is required as a cofactor.

Its subcellular location is the cell membrane. Functionally, probably a soluble electron acceptor for the integral membrane protein electron transfer alternative complex III (ACIII). The chain is Auracyanin-A from Chloroflexus aurantiacus (strain ATCC 29366 / DSM 635 / J-10-fl).